The sequence spans 527 residues: Bifunctional purine biosynthesis protein PurH (527 aa).

The region spanning 1-149 is the MGS-like domain; it reads MASDFLPVRR…KNFARVAVAT (149 aa).

This sequence belongs to the PurH family.

The enzyme catalyses (6R)-10-formyltetrahydrofolate + 5-amino-1-(5-phospho-beta-D-ribosyl)imidazole-4-carboxamide = 5-formamido-1-(5-phospho-D-ribosyl)imidazole-4-carboxamide + (6S)-5,6,7,8-tetrahydrofolate. It carries out the reaction IMP + H2O = 5-formamido-1-(5-phospho-D-ribosyl)imidazole-4-carboxamide. It participates in purine metabolism; IMP biosynthesis via de novo pathway; 5-formamido-1-(5-phospho-D-ribosyl)imidazole-4-carboxamide from 5-amino-1-(5-phospho-D-ribosyl)imidazole-4-carboxamide (10-formyl THF route): step 1/1. It functions in the pathway purine metabolism; IMP biosynthesis via de novo pathway; IMP from 5-formamido-1-(5-phospho-D-ribosyl)imidazole-4-carboxamide: step 1/1. The chain is Bifunctional purine biosynthesis protein PurH from Xanthomonas campestris pv. campestris (strain 8004).